The chain runs to 509 residues: Ribonuclease E/G-like protein (509 aa).

One can recognise an S1 motif domain in the interval 35–117; that stretch reads SDIYLGCVDK…LTANITLSGR (83 aa). 2 residues coordinate Mg(2+): Asp296 and Asp339.

Belongs to the RNase E/G family. Requires Mg(2+) as cofactor.

It is found in the plastid. Its subcellular location is the chloroplast stroma. Functionally, involved in intercistronic processing of primary transcripts from chloroplast operons. The endonucleolytic activity of the enzyme depends on the number of phosphates at the 5' end, is inhibited by structured RNA, and preferentially cleaves A/U-rich sequences. In Pyropia yezoensis (Susabi-nori), this protein is Ribonuclease E/G-like protein (rne).